Here is a 239-residue protein sequence, read N- to C-terminus: 1-(5-phosphoribosyl)-5-[(5-phosphoribosylamino)methylideneamino] imidazole-4-carboxamide isomerase (239 aa).

Asp8 (proton acceptor) is an active-site residue. Asp129 functions as the Proton donor in the catalytic mechanism.

The protein belongs to the HisA/HisF family.

The protein localises to the cytoplasm. It carries out the reaction 1-(5-phospho-beta-D-ribosyl)-5-[(5-phospho-beta-D-ribosylamino)methylideneamino]imidazole-4-carboxamide = 5-[(5-phospho-1-deoxy-D-ribulos-1-ylimino)methylamino]-1-(5-phospho-beta-D-ribosyl)imidazole-4-carboxamide. Its pathway is amino-acid biosynthesis; L-histidine biosynthesis; L-histidine from 5-phospho-alpha-D-ribose 1-diphosphate: step 4/9. This is 1-(5-phosphoribosyl)-5-[(5-phosphoribosylamino)methylideneamino] imidazole-4-carboxamide isomerase from Bacillus cereus (strain AH820).